Here is a 450-residue protein sequence, read N- to C-terminus: Cyclic GMP-AMP phosphodiesterase SMPDL3A (450 aa).

The signal sequence occupies residues 1–22; it reads MARLGALVCCLLAAWHCRPGLG. Residues D42 and H44 each contribute to the Zn(2+) site. C59 and C78 form a disulfide bridge. D107 contacts Zn(2+). H111 is an ATP binding site. N124 and N128 each carry an N-linked (GlcNAc...) asparagine glycan. Zn(2+) is bound at residue N148. 2 residues coordinate ATP: N148 and H149. 2 N-linked (GlcNAc...) asparagine glycosylation sites follow: N219 and N235. Zn(2+) is bound by residues H249, H290, and H292. N-linked (GlcNAc...) asparagine glycans are attached at residues N353 and N370. 2 disulfide bridges follow: C417–C421 and C427–C440.

The protein belongs to the acid sphingomyelinase family. As to quaternary structure, monomer. Homodimer; homodimerizes following 2',3'-cGAMP-binding. It depends on Zn(2+) as a cofactor.

Its subcellular location is the secreted. It carries out the reaction 2',3'-cGAMP + H2O = 5'-pGpA(2'-5') + H(+). It catalyses the reaction 5'-pGpA(2'-5') + H2O = 5'-GpA(2'-5') + phosphate. The enzyme catalyses a ribonucleoside 5'-triphosphate + H2O = a ribonucleoside 5'-diphosphate + phosphate + H(+). The catalysed reaction is ATP + H2O = ADP + phosphate + H(+). Functionally, cyclic-nucleotide phosphodiesterase that acts as a negative regulator of innate immunity by mediating degradation of 2',3'-cGAMP, thereby inhibiting the cGAS-STING signaling. Specifically linearizes 2',3'-cGAMP into 2'5'-bond pGpA and further hydrolyzes pGpA to produce GpA. Also has in vitro nucleotide phosphodiesterase activity with nucleoside triphosphates, such as ATP. Has in vitro activity with p-nitrophenyl-TMP. Has lower activity with nucleoside diphosphates, and no activity with nucleoside monophosphates. Has in vitro activity with CDP-choline, giving rise to CMP and phosphocholine. Has in vitro activity with CDP-ethanolamine. Does not have sphingomyelin phosphodiesterase activity. The chain is Cyclic GMP-AMP phosphodiesterase SMPDL3A (SMPDL3A) from Bos taurus (Bovine).